The sequence spans 344 residues: Eukaryotic translation initiation factor 2 subunit alpha (344 aa).

The S1 motif domain occupies 21–92; sequence DMAVMIQVKT…ERGYIDLSKR (72 aa). The residue at position 56 (Ser-56) is a Phosphoserine; by GCN2. The interval 309–344 is disordered; that stretch reads LRMDNEEMSGDEGSEDEEEDTGMGEVDIDGGSGIIE. The span at 314 to 336 shows a compositional bias: acidic residues; sequence EEMSGDEGSEDEEEDTGMGEVDI. Residues Ser-317 and Ser-322 each carry the phosphoserine; by CK2 modification.

It belongs to the eIF-2-alpha family. Eukaryotic translation initiation factor 2 eIF2 is a heterotrimeric complex composed of an alpha, a beta and a gamma subunit. In terms of processing, phosphorylated at Ser-56 by GCN2. Phosphorylated at Ser-317 and Ser-322 by CK2.

It localises to the cytoplasm. Its subcellular location is the cytosol. In terms of biological role, functions in the early steps of protein synthesis by forming a ternary complex with GTP and initiator tRNA. This complex binds to a 40S ribosomal subunit, followed by mRNA binding to form a 43S pre-initiation complex. Junction of the 60S ribosomal subunit to form the 80S initiation complex is preceded by hydrolysis of the GTP bound to eIF-2 and release of an eIF-2-GDP binary complex. In order for eIF-2 to recycle and catalyze another round of initiation, the GDP bound to eIF-2 must exchange with GTP by way of a reaction catalyzed by eIF2B. The sequence is that of Eukaryotic translation initiation factor 2 subunit alpha from Arabidopsis thaliana (Mouse-ear cress).